The chain runs to 633 residues: Chaperone protein HtpG (633 aa).

An a; substrate-binding region spans residues 1 to 341 (MTAPHETMSF…SADLPLNVSR (341 aa)). The b stretch occupies residues 342–562 (ELLQESRDVK…EGDMSGYLQR (221 aa)). Residues 563–633 (LLKQAGQKAP…YVQRVNKLLA (71 aa)) form a c region.

The protein belongs to the heat shock protein 90 family. In terms of assembly, homodimer.

The protein resides in the cytoplasm. Its function is as follows. Molecular chaperone. Has ATPase activity. This Cupriavidus necator (strain ATCC 17699 / DSM 428 / KCTC 22496 / NCIMB 10442 / H16 / Stanier 337) (Ralstonia eutropha) protein is Chaperone protein HtpG.